Reading from the N-terminus, the 148-residue chain is Putative nickel-responsive regulator (148 aa).

Residues His-76, His-87, His-89, and Cys-95 each contribute to the Ni(2+) site.

It belongs to the transcriptional regulatory CopG/NikR family. The cofactor is Ni(2+).

Transcriptional regulator. The protein is Putative nickel-responsive regulator of Rhodopseudomonas palustris (strain ATCC BAA-98 / CGA009).